A 472-amino-acid chain; its full sequence is MRIYNTLSRRKEEFKPLEEGKVKMYVCGPTVYNLIHIGNARPMIVFDTVRRYLEYKGYDVNYVSNFTDVDDKIIKKANEEGVSAEEISTRYIAECKKDMEGMNIKPATTHPLATQEIGGMIDMIQTLIDKGYAYEVNGTVYYRTRKFAEYGKLSKKNIDDLEAGHRDEAHSLKVTGEDEKEDPLDFVLWKPKKEGEPSWPSPWSDGRPGWHIECSVMSKKYLADEIDIHAGGEDLIFPHHENEIAQSEAANGVPFSKYWMHNAFLNIDNKKMSKSLGNFFTVRDISREYDLEVLRFFMLSAHYRNPVNFSHDLMESAKNGLDRILTAVDNLRHLSENAKDVIMTEDEKKIIASIDDIYKKFEDSMDDDFNTADAISAIFELVKLANSNSSSDNSKEYIDTLMKKITTLTDILGLKTDKKEEMLDEDIEALIAERQQARKDKNFARADEIRDELLAKGIVLKDTREGVRWSRA.

Cysteine 27 serves as a coordination point for Zn(2+). Residues proline 29 to asparagine 39 carry the 'HIGH' region motif. 3 residues coordinate Zn(2+): cysteine 214, histidine 239, and glutamate 243. The 'KMSKS' region signature appears at lysine 271 to serine 275. Lysine 274 is a binding site for ATP.

It belongs to the class-I aminoacyl-tRNA synthetase family. In terms of assembly, monomer. Zn(2+) serves as cofactor.

It is found in the cytoplasm. It carries out the reaction tRNA(Cys) + L-cysteine + ATP = L-cysteinyl-tRNA(Cys) + AMP + diphosphate. The sequence is that of Cysteine--tRNA ligase from Lachnospira eligens (strain ATCC 27750 / DSM 3376 / VPI C15-48 / C15-B4) (Eubacterium eligens).